Here is a 513-residue protein sequence, read N- to C-terminus: MESQPVIWYCHSCSNEFQRPGNCPRCNSDFVEMVEPNTAPEDDPRAANFVNATEFNDPNAMLQNILQSLGQGVVPNVNPTDANRTANPNTNSNPNPNATNAQPNPTMFSTGQFSTEQGLPNVFFGAAAAQPGSGTPFVMPGIVNAAQIRNFFQNIMGGNAPQPEANSEQARNANTETSNPPFASAQTQGQEHRPSSPNPAEHMTGAYVNTPLNQPPSYAASTQPEFQQTTSPIFSSSSTPPPPPPRPSQPTSGESQNTNPRFPFSAQSFVFSVGPNGALHQVNTSTENPQNAQAGAIPITDLGSILERIFGSLNQPGAQQGEGEPFNPANMFSNIFNLSGNPGDYAWGARGLDDIISQLMEQAQGHNAPAPAPEDVIAKMKVQKPPKELIDEEGECTICMEMFKINDDVIQLPCKHYFHENCIKPWLRVNGTCAICRAPVDPNSQQRNNTSTDSANGHNPSNHANPSTSTTNDQGATLRNESFNAASQSNLSSEHGHSSRTPMDDFVDEEPLE.

Disordered regions lie at residues 72 to 113 (GVVP…TGQF) and 155 to 262 (IMGG…NPRF). A compositionally biased stretch (low complexity) spans 82–106 (ANRTANPNTNSNPNPNATNAQPNPT). 2 stretches are compositionally biased toward polar residues: residues 164–189 (EANS…QTQG) and 210–228 (TPLN…EFQQ). Residues 229-238 (TTSPIFSSSS) are compositionally biased toward low complexity. Over residues 239–248 (TPPPPPPRPS) the composition is skewed to pro residues. Residues 253–262 (GESQNTNPRF) show a composition bias toward polar residues. The RING-type; atypical zinc-finger motif lies at 396–437 (CTICMEMFKINDDVIQLPCKHYFHENCIKPWLRVNGTCAICR). The tract at residues 439–513 (PVDPNSQQRN…DDFVDEEPLE (75 aa)) is disordered. A compositionally biased stretch (polar residues) spans 442–493 (PNSQQRNNTSTDSANGHNPSNHANPSTSTTNDQGATLRNESFNAASQSNLSS).

This is an uncharacterized protein from Schizosaccharomyces pombe (strain 972 / ATCC 24843) (Fission yeast).